The chain runs to 662 residues: MSDLFSFNKEKKNKLVDNNYSAKDIEVLEGLEPVRKRPGMYIGGTDSNAMHHLVSEVLDNAMDEAVAGFASIITIKMHQDHSITIFDNGRGIPIDNHPKFPDKSALEVILTTLHSGGKFSNNVYHTAGGLHGVGISVVNALSKHLEIKVYKQGKLYSQSYSKGEKLTDLICEEASKRLRGTSINFTPDPEIFSEKLHFNPKKIYELARSKAYLYRGVTIEWECEVEVPSDIPKKALINFPNGLKDYLSSKITLDNLIIPEIFSGNIESTPDEIKLEWAICWQNNDNSAFIQSYCNTVPTPQGGTHEQGLKSAILRGLKAYGEMIGNKKAANLTIEDILETASVVLSIFIAEPSFQGQTKEKLVSNGVSKPVENIIKDHFDHFLSSDKALATNLLEHVIAIAEFRISKKNEKNISRKNATQKLRLPGKLADCTRTTPGGTELFIVEGDSAGGSAKQARNRETQAVLPLWGKVLNVASSTLEKIVNNQAIQDLEIALACGSLKNYKEENLRYEKIIIMTDADVDGAHIASLLMTFFFLRMPKLVEEGHLYLAKPPLYRLTQSNKTYYAGDEEEKAKLTDKLSKASKAKIEVGRFKGLGEMMPAQLKETTMHPEKRSLLKVTLEDFQNVDKIVDDLMGKKPEKRFQFIYEQALVKMDKIINELDI.

Residues Tyr-20, Asn-60, Asp-87, Gly-129 to Ile-135, and Lys-359 each bind ATP. Residues Thr-439–Pro-553 form the Toprim domain. Mg(2+) contacts are provided by Glu-445, Asp-518, and Asp-520.

The protein belongs to the type II topoisomerase family. ParE type 1 subfamily. Heterotetramer composed of ParC and ParE. It depends on Mg(2+) as a cofactor. Requires Mn(2+) as cofactor. Ca(2+) serves as cofactor.

It carries out the reaction ATP-dependent breakage, passage and rejoining of double-stranded DNA.. Topoisomerase IV is essential for chromosome segregation. It relaxes supercoiled DNA. Performs the decatenation events required during the replication of a circular DNA molecule. This is DNA topoisomerase 4 subunit B from Rickettsia felis (strain ATCC VR-1525 / URRWXCal2) (Rickettsia azadi).